The chain runs to 246 residues: Pyrroloquinoline-quinone synthase (246 aa).

Belongs to the PqqC family.

It catalyses the reaction 6-(2-amino-2-carboxyethyl)-7,8-dioxo-1,2,3,4,7,8-hexahydroquinoline-2,4-dicarboxylate + 3 O2 = pyrroloquinoline quinone + 2 H2O2 + 2 H2O + H(+). It functions in the pathway cofactor biosynthesis; pyrroloquinoline quinone biosynthesis. In terms of biological role, ring cyclization and eight-electron oxidation of 3a-(2-amino-2-carboxyethyl)-4,5-dioxo-4,5,6,7,8,9-hexahydroquinoline-7,9-dicarboxylic-acid to PQQ. This chain is Pyrroloquinoline-quinone synthase, found in Acidiphilium cryptum (strain JF-5).